A 654-amino-acid polypeptide reads, in one-letter code: DNA ligase (654 aa).

NAD(+) contacts are provided by residues 34-38 (DLEYD), 83-84 (SL), and Glu-114. Residue Lys-116 is the N6-AMP-lysine intermediate of the active site. The NAD(+) site is built by Arg-137, Glu-171, Lys-280, and Lys-304. Zn(2+) is bound by residues Cys-396, Cys-399, Cys-414, and Cys-419. Residues 577-654 (VISTILSGYT…EEQFYDLIKQ (78 aa)) form the BRCT domain.

The protein belongs to the NAD-dependent DNA ligase family. LigA subfamily. The cofactor is Mg(2+). Mn(2+) is required as a cofactor.

The enzyme catalyses NAD(+) + (deoxyribonucleotide)n-3'-hydroxyl + 5'-phospho-(deoxyribonucleotide)m = (deoxyribonucleotide)n+m + AMP + beta-nicotinamide D-nucleotide.. DNA ligase that catalyzes the formation of phosphodiester linkages between 5'-phosphoryl and 3'-hydroxyl groups in double-stranded DNA using NAD as a coenzyme and as the energy source for the reaction. It is essential for DNA replication and repair of damaged DNA. The chain is DNA ligase from Mycoplasmopsis agalactiae (strain NCTC 10123 / CIP 59.7 / PG2) (Mycoplasma agalactiae).